We begin with the raw amino-acid sequence, 440 residues long: uncharacterized protein (440 aa).

An N-terminal signal peptide occupies residues 1–17; the sequence is MDRFFCTVWVWSVLFGA. C18 carries the N-palmitoyl cysteine lipid modification. Residue C18 is the site of S-diacylglycerol cysteine attachment. A disordered region spans residues 241 to 268; the sequence is SALQERPSSPEPVVSTIPSPEGEENSAA.

It localises to the cell membrane. This is an uncharacterized protein from Treponema pallidum (strain Nichols).